The primary structure comprises 1140 residues: Chromosome partition protein Smc (1140 aa).

An ATP-binding site is contributed by Pro34–Asn41. The stretch at Val160 to Ser484 forms a coiled coil. The SMC hinge domain occupies Glu502–Leu619. Positions Leu660–Phe990 form a coiled coil.

It belongs to the SMC family. In terms of assembly, homodimer.

Its subcellular location is the cytoplasm. Functionally, required for chromosome condensation and partitioning. The chain is Chromosome partition protein Smc from Thermoplasma acidophilum (strain ATCC 25905 / DSM 1728 / JCM 9062 / NBRC 15155 / AMRC-C165).